The chain runs to 353 residues: uncharacterized protein (353 aa).

It belongs to the MG067/MG068/MG395 family.

This is an uncharacterized protein from Mycoplasma pneumoniae (strain ATCC 29342 / M129 / Subtype 1) (Mycoplasmoides pneumoniae).